The primary structure comprises 68 residues: MSKLGALLTICLLLFSLTAVPLDGDQHADQPAQRLQDRIPTEDHPLFDPNKRCCPPVACNMGCKPCCG.

The first 19 residues, 1-19 (MSKLGALLTICLLLFSLTA), serve as a signal peptide directing secretion. The propeptide occupies 20 to 52 (VPLDGDQHADQPAQRLQDRIPTEDHPLFDPNKR). 3 disulfide bridges follow: Cys-53/Cys-67, Cys-54/Cys-63, and Cys-59/Cys-66. Residue Met-61 is modified to Methionine sulfoxide; partial. At Cys-67 the chain carries Cysteine amide.

Expressed by the venom duct.

Its subcellular location is the secreted. Its function is as follows. Intracranial injection into mice causes scratching, hyperactivity and circular motion. This is Conotoxin tx3b from Conus textile (Cloth-of-gold cone).